Reading from the N-terminus, the 169-residue chain is Centrin-1 (169 aa).

The interval 1–21 is essential for homooligomerization; that stretch reads MHSRKGASSLPRGRGAGKKTE. Residues 1–25 are disordered; that stretch reads MHSRKGASSLPRGRGAGKKTELTEE. EF-hand domains follow at residues 25–60, 61–96, 98–133, and 134–169; these read EQRQEIKEAFDLFDTDGSGCIDAKELKVAMRALGFE, PKKEEIRKMIADVDKDGTGSVDFQEFLSLMTVKMAE, DPREEILKAFRLFDDDETGKISFKNLKRVSKELGEN, and LTDEELQEMIDEADRDGDGEINEEEFIRIMRKTNLF. Asp38, Asp40, Ser42, Cys44, Glu49, Asp74, Asp76, Thr78, Ser80, and Glu85 together coordinate Ca(2+).

This sequence belongs to the centrin family. As to quaternary structure, monomer. Homooligomerizes in a Ca(2+)-dependent manner. Interaction via the C-terminus with other proteins disrupts and/or prevents homooligomerization. Interacts with SFI1.

It is found in the cytoplasm. It localises to the cytoskeleton. The protein localises to the microtubule organizing center. The protein resides in the centrosome. Functionally, acts as a calcium sensor. Part of the centrosome outer core complex. The protein is Centrin-1 of Toxoplasma gondii (strain ATCC 50611 / Me49).